The primary structure comprises 149 residues: D-aminoacyl-tRNA deacylase (149 aa).

The short motif at 137–138 is the Gly-cisPro motif, important for rejection of L-amino acids element; that stretch reads GP.

Belongs to the DTD family. In terms of assembly, homodimer.

The protein localises to the cytoplasm. The enzyme catalyses glycyl-tRNA(Ala) + H2O = tRNA(Ala) + glycine + H(+). The catalysed reaction is a D-aminoacyl-tRNA + H2O = a tRNA + a D-alpha-amino acid + H(+). Its function is as follows. An aminoacyl-tRNA editing enzyme that deacylates mischarged D-aminoacyl-tRNAs. Also deacylates mischarged glycyl-tRNA(Ala), protecting cells against glycine mischarging by AlaRS. Acts via tRNA-based rather than protein-based catalysis; rejects L-amino acids rather than detecting D-amino acids in the active site. By recycling D-aminoacyl-tRNA to D-amino acids and free tRNA molecules, this enzyme counteracts the toxicity associated with the formation of D-aminoacyl-tRNA entities in vivo and helps enforce protein L-homochirality. The chain is D-aminoacyl-tRNA deacylase from Geobacter sp. (strain M21).